The chain runs to 347 residues: Galactoside alpha-(1,2)-fucosyltransferase 2 (347 aa).

Topologically, residues 1–5 are cytoplasmic; it reads MASAQ. Residues 6 to 26 form a helical; Signal-anchor for type II membrane protein membrane-spanning segment; it reads VPFSFPLAHFLIFVFVTSTII. Residues 27-347 are Lumenal-facing; that stretch reads HLQQRIVKLQ…PADLSPLLKH (321 aa). 4 N-linked (GlcNAc...) asparagine glycosylation sites follow: asparagine 192, asparagine 258, asparagine 286, and asparagine 312.

It belongs to the glycosyltransferase 11 family. In terms of tissue distribution, expressed in stomach, colon, ovary and uterus, specifically in luminal uterine epithelium. Expressed in various tissues including heart, liver, kidney, testis, epididymis, small intestine,and cecum. Expressed in duodenum, jejunum and ileum.

It is found in the golgi apparatus. Its subcellular location is the golgi stack membrane. It carries out the reaction a beta-D-galactosyl-(1-&gt;3)-N-acetyl-beta-D-glucosaminyl derivative + GDP-beta-L-fucose = an alpha-L-Fuc-(1-&gt;2)-beta-D-Gal-(1-&gt;3)-beta-D-GlcNAc derivative + GDP + H(+). It catalyses the reaction a beta-D-galactosyl-(1-&gt;4)-N-acetyl-beta-D-glucosaminyl derivative + GDP-beta-L-fucose = an alpha-L-Fuc-(1-&gt;2)-beta-D-Gal-(1-&gt;4)-beta-D-GlcNAc derivative + GDP + H(+). The enzyme catalyses a neolactoside nLc4Cer + GDP-beta-L-fucose = a neolactoside IV(2)-alpha-Fuc-nLc4Cer + GDP + H(+). The catalysed reaction is a neolactoside nLc4Cer(d18:1(4E)) + GDP-beta-L-fucose = a neolactoside IV(2)-alpha-Fuc-nLc4Cer(d18:1(4E)) + GDP + H(+). It carries out the reaction a ganglioside GM1 + GDP-beta-L-fucose = a ganglioside Fuc-GM1 + GDP + H(+). It catalyses the reaction a ganglioside GA1 + GDP-beta-L-fucose = a ganglioside Fuc-GA1 + GDP + H(+). The enzyme catalyses Lc4Cer + GDP-beta-L-fucose = alpha-L-fucosyl-(1-&gt;2)-beta-D-galactosyl-(1-&gt;3)-N-acetyl-beta-D-glucosaminyl-(1-&gt;3)-beta-D-galactosyl-(1-&gt;4)-beta-D-glucosyl-(1&lt;-&gt;1')-ceramide + GDP + H(+). The catalysed reaction is a beta-D-Gal-(1-&gt;3)-beta-D-GlcNAc-(1-&gt;3)-beta-D-Gal-(1-&gt;4)-beta-D-Glc-(1&lt;-&gt;1')-Cer(d18:1(4E)) + GDP-beta-L-fucose = alpha-L-fucosyl-(1-&gt;2)- beta-D-galactosyl-(1-&gt;3)-N-acetyl-beta-D-glucosaminyl-(1-&gt;3)-beta-D-galactosyl-(1-&gt;4)-beta-D-glucosyl-(1&lt;-&gt;1')-N-acylsphing-4-enine + GDP + H(+). It carries out the reaction a ganglioside GD1b + GDP-beta-L-fucose = a ganglioside Fuc-GD1b + GDP + H(+). It catalyses the reaction a ganglioside GM1 (d18:1(4E)) + GDP-beta-L-fucose = a ganglioside Fuc-GM1 (d18:1(4E)) + GDP + H(+). The enzyme catalyses a globoside GalGb4Cer (d18:1(4E)) + GDP-beta-L-fucose = a globoside Globo-H (d18:1(4E)) + GDP + H(+). The catalysed reaction is a lactoside III(4)-a-Fuc-Lc4Cer + GDP-beta-L-fucose = a lactoside IV(2),III(4)-a-[Fuc]2-Lc4Cer + GDP + H(+). It carries out the reaction beta-D-galactosyl-(1-&gt;3)-N-acetyl-D-galactosamine + GDP-beta-L-fucose = alpha-L-fucosyl-(1-&gt;2)-beta-D-galactosyl-(1-&gt;3)-N-acetyl-D-galactosamine + GDP + H(+). It participates in protein modification; protein glycosylation. Functionally, catalyzes the transfer of L-fucose, from a guanosine diphosphate-beta-L-fucose, to the terminal galactose on both O- and N-linked glycans chains of cell surface glycoproteins and glycolipids and the resulting epitope regulates several processes such as cell-cell interaction including host-microbe interaction, cell surface expression and cell proliferation. Preferentially fucosylates gangliosides GA1 and GM1 in the antrum, cecum and colon and in the female reproductive organs. Fucosylated host glycoproteins or glycolipids mediate interaction with intestinal microbiota influencing its composition. Creates a soluble precursor oligosaccharide FuC-alpha ((1,2)Galbeta-) called the H antigen which is an essential substrate for the final step in the soluble ABO blood group antigen synthesis pathway. In Mus musculus (Mouse), this protein is Galactoside alpha-(1,2)-fucosyltransferase 2.